A 633-amino-acid chain; its full sequence is Heterogeneous nuclear ribonucleoprotein R (633 aa).

Residues 1–24 are disordered; the sequence is MANQVNGNAVQLKEEEEPMDTSSV. A2 is modified (N-acetylalanine). Residues K13 and K171 each participate in a glycyl lysine isopeptide (Lys-Gly) (interchain with G-Cter in SUMO2) cross-link. RRM domains lie at 165 to 244, 246 to 328, and 341 to 411; these read TEVF…ISVA, NRLF…WADP, and KVLF…LAKP. K359 participates in a covalent cross-link: Glycyl lysine isopeptide (Lys-Gly) (interchain with G-Cter in SUMO2). At K366 the chain carries N6-acetyllysine. Positions 412–418 match the Nuclear localization signal motif; it reads PDKKRKE. The disordered stretch occupies residues 412 to 456; the sequence is PDKKRKERQAARQASRSTAYEDYYYHPPPRMPPPIRGRGRGGGRG. Pro residues predominate over residues 437 to 446; sequence HPPPRMPPPI. The RNA-binding RGG-box stretch occupies residues 447 to 567; that stretch reads RGRGRGGGRG…SRGSRGNRGG (121 aa). One copy of the 1; approximate repeat lies at 462–471; the sequence is PDYYGYEDYY. The interval 462–497 is 3 X 11 AA approximate repeats of D-D-Y-Y-G-Y-D-Y-H-D-Y; it reads PDYYGYEDYYDDYYGYDYHDYRGGYEDPYYGYDDGY. Repeat 2 spans residues 472–482; the sequence is DDYYGYDYHDY. The 3; approximate repeat unit spans residues 488–497; sequence DPYYGYDDGY. Positions 501 to 510 are enriched in gly residues; it reads GRGGGRGGRG. Residues 501 to 633 form a disordered region; that stretch reads GRGGGRGGRG…YQDTYGQQWK (133 aa). Residues 511-524 show a composition bias toward pro residues; it reads APPPPRGRGAPPPR. A compositionally biased stretch (low complexity) spans 525-541; sequence GRAGYSQRGAPLGPPRG. A compositionally biased stretch (gly residues) spans 558 to 570; it reads SRGSRGNRGGNVG. Positions 588 to 604 are enriched in polar residues; sequence TNNQQNWGSQPIAQQPL. A compositionally biased stretch (low complexity) spans 605 to 621; the sequence is QQGGDYSGNYGYNNDNQ. Residues 622-633 show a composition bias toward polar residues; sequence EFYQDTYGQQWK.

In terms of assembly, identified in the spliceosome C complex. Identified in a IGF2BP1-dependent mRNP granule complex containing untranslated mRNAs. Interacts with GTPBP1.

The protein resides in the nucleus. It is found in the microsome. It localises to the nucleoplasm. Its subcellular location is the cytoplasm. In terms of biological role, component of ribonucleosomes, which are complexes of at least 20 other different heterogeneous nuclear ribonucleoproteins (hnRNP). hnRNP play an important role in processing of precursor mRNA in the nucleus. The sequence is that of Heterogeneous nuclear ribonucleoprotein R (HNRNPR) from Homo sapiens (Human).